A 212-amino-acid chain; its full sequence is 3-isopropylmalate dehydratase small subunit (212 aa).

The protein belongs to the LeuD family. LeuD type 1 subfamily. As to quaternary structure, heterodimer of LeuC and LeuD.

It catalyses the reaction (2R,3S)-3-isopropylmalate = (2S)-2-isopropylmalate. It participates in amino-acid biosynthesis; L-leucine biosynthesis; L-leucine from 3-methyl-2-oxobutanoate: step 2/4. Functionally, catalyzes the isomerization between 2-isopropylmalate and 3-isopropylmalate, via the formation of 2-isopropylmaleate. The sequence is that of 3-isopropylmalate dehydratase small subunit from Pseudomonas aeruginosa (strain LESB58).